The following is a 548-amino-acid chain: Glucose-6-phosphate isomerase (548 aa).

The active-site Proton donor is the Glu355. Catalysis depends on residues His386 and Lys511.

The protein belongs to the GPI family.

It is found in the cytoplasm. The catalysed reaction is alpha-D-glucose 6-phosphate = beta-D-fructose 6-phosphate. The protein operates within carbohydrate biosynthesis; gluconeogenesis. Its pathway is carbohydrate degradation; glycolysis; D-glyceraldehyde 3-phosphate and glycerone phosphate from D-glucose: step 2/4. Functionally, catalyzes the reversible isomerization of glucose-6-phosphate to fructose-6-phosphate. This Wigglesworthia glossinidia brevipalpis protein is Glucose-6-phosphate isomerase.